A 355-amino-acid chain; its full sequence is (R,S)-reticuline 7-O-methyltransferase (355 aa).

S-adenosyl-L-methionine-binding positions include 197-200 (VGGG), aspartate 221, 221-222 (DL), 241-242 (DM), and lysine 255. The active-site Proton acceptor is the histidine 259.

This sequence belongs to the class I-like SAM-binding methyltransferase superfamily. Cation-independent O-methyltransferase family. Homodimer. As to expression, expressed in capsules, buds and stems, and at lower levels in leaves. Localized to parenchyma cells within the vascular bundle, but only to those cells distal to laticifers. In roots, found in the pericycle within the stele.

The catalysed reaction is (S)-reticuline + S-adenosyl-L-methionine = (S)-laudanine + S-adenosyl-L-homocysteine + H(+). The enzyme catalyses (R)-reticuline + S-adenosyl-L-methionine = (R)-laudanine + S-adenosyl-L-homocysteine + H(+). Functionally, catalyzes the transfer of a methyl group to reticuline to form laudanine. Methylates the simple catechols guaiacol and isovanillic acid as well as the tetrahydrobenzylisoquinolines (R)-reticuline, (S)-reticuline, (R,S)-orientaline, (R)-protosinomenine and (R,S)-isoorientaline. Involved in the production of laudanine. This Papaver somniferum (Opium poppy) protein is (R,S)-reticuline 7-O-methyltransferase.